Reading from the N-terminus, the 481-residue chain is ATP synthase subunit beta, chloroplastic (481 aa).

161 to 168 (GGAGVGKT) provides a ligand contact to ATP.

This sequence belongs to the ATPase alpha/beta chains family. As to quaternary structure, F-type ATPases have 2 components, CF(1) - the catalytic core - and CF(0) - the membrane proton channel. CF(1) has five subunits: alpha(3), beta(3), gamma(1), delta(1), epsilon(1). CF(0) has four main subunits: a(1), b(1), b'(1) and c(9-12).

Its subcellular location is the plastid. It is found in the chloroplast thylakoid membrane. The catalysed reaction is ATP + H2O + 4 H(+)(in) = ADP + phosphate + 5 H(+)(out). Its function is as follows. Produces ATP from ADP in the presence of a proton gradient across the membrane. The catalytic sites are hosted primarily by the beta subunits. The chain is ATP synthase subunit beta, chloroplastic from Pylaiella littoralis (Seaweed).